Reading from the N-terminus, the 323-residue chain is Acetyl esterase (323 aa).

The Involved in the stabilization of the negatively charged intermediate by the formation of the oxyanion hole signature appears at 91-93 (HGG). Residues serine 165, aspartate 262, and histidine 292 contribute to the active site.

This sequence belongs to the 'GDXG' lipolytic enzyme family. As to quaternary structure, homodimer. Interacts with MalT and MelA.

It localises to the cytoplasm. Its function is as follows. Displays esterase activity towards short chain fatty esters (acyl chain length of up to 8 carbons). Able to hydrolyze triacetylglycerol (triacetin) and tributyrylglycerol (tributyrin), but not trioleylglycerol (triolein) or cholesterol oleate. Negatively regulates MalT activity by antagonizing maltotriose binding. Inhibits MelA galactosidase activity. The protein is Acetyl esterase of Salmonella typhi.